Reading from the N-terminus, the 157-residue chain is Glutaredoxin-2, mitochondrial (157 aa).

A mitochondrion-targeting transit peptide spans 1–18; it reads MYWRRAALVGTRLIPVRS. Phosphoserine is present on Ser-20. The Glutaredoxin domain maps to 51–151; it reads VNQIQETISN…PLVHQCHLKN (101 aa). Position 62 (Cys-62) interacts with [2Fe-2S] cluster. Lys-68 provides a ligand contact to glutathione. Residue Cys-71 is modified to S-glutathionyl cysteine; alternate. Residues Cys-71 and Cys-74 are joined by a disulfide bond. Gln-103 and Val-115 together coordinate glutathione. Position 147 (Cys-147) interacts with [2Fe-2S] cluster.

Belongs to the glutaredoxin family. In terms of assembly, monomer; active form. Homodimer; inactive form. The homodimer is probably linked by 1 2Fe-2S cluster.

Its subcellular location is the mitochondrion. Its activity is regulated as follows. The 2Fe-2S present in the homodimer leads to inactivation of the enzyme. The 2Fe-2S may serve as a redox sensor: the presence of one-electron oxidants or reductants leading to the loss of the 2Fe-2S cluster, subsequent monomerization and activation of the enzyme. Functionally, glutathione-dependent oxidoreductase that facilitates the maintenance of mitochondrial redox homeostasis upon induction of apoptosis by oxidative stress. Involved in response to hydrogen peroxide and regulation of apoptosis caused by oxidative stress. Acts as a very efficient catalyst of monothiol reactions because of its high affinity for protein glutathione-mixed disulfides. Can receive electrons not only from glutathione (GSH), but also from thioredoxin reductase supporting both monothiol and dithiol reactions. Efficiently catalyzes both glutathionylation and deglutathionylation of mitochondrial complex I, which in turn regulates the superoxide production by the complex. Overexpression decreases the susceptibility to apoptosis and prevents loss of cardiolipin and cytochrome c release. The protein is Glutaredoxin-2, mitochondrial (GLRX2) of Bos taurus (Bovine).